The following is a 129-amino-acid chain: Glycine cleavage system H protein (129 aa).

The Lipoyl-binding domain occupies 24-106; sequence TFTVGISEHA…YGDGWLFRIK (83 aa). An N6-lipoyllysine modification is found at Lys65.

The protein belongs to the GcvH family. The glycine cleavage system is composed of four proteins: P, T, L and H. It depends on (R)-lipoate as a cofactor.

The glycine cleavage system catalyzes the degradation of glycine. The H protein shuttles the methylamine group of glycine from the P protein to the T protein. The polypeptide is Glycine cleavage system H protein (Pseudoalteromonas atlantica (strain T6c / ATCC BAA-1087)).